A 338-amino-acid chain; its full sequence is MTDHALLLVNLGSPDSPEVADVRRYLDQFLMDPYVIDLPWPLRRLLVSLILRKRPEQSAHAYASIWWPEGSPLIALSRRLQEAVQAHWHEGPVELAMRYGNLSIEAALNRLAEEGVRRVTLAPLYPQFADSTVTTVVEETRRVLRASGLTLELRVLEPFFARPEYLDALARSAGPHLQQGFDHLLLSFHGLPERHLRKADPSGRHCLGSADCCREAPVEVLARCYRAQCLRSAEGFARRMGLDEGRWSVSFQSRLGRARWISPYTEEQLDALAARGVKRLLVMCPAFVTDCIETLEEIGQRGREQFQAAGGEELILVPCLNDHPAWASALAQLCRTPG.

2 residues coordinate Fe cation: H189 and E293.

This sequence belongs to the ferrochelatase family.

The protein resides in the cytoplasm. The enzyme catalyses heme b + 2 H(+) = protoporphyrin IX + Fe(2+). The protein operates within porphyrin-containing compound metabolism; protoheme biosynthesis; protoheme from protoporphyrin-IX: step 1/1. Its function is as follows. Catalyzes the ferrous insertion into protoporphyrin IX. The polypeptide is Ferrochelatase (Azotobacter vinelandii (strain DJ / ATCC BAA-1303)).